Here is a 534-residue protein sequence, read N- to C-terminus: Autophagy-related protein 20 (534 aa).

Residues 1-21 are disordered; it reads MAQDDSYEEKPEVISSDSGGS. One can recognise a PX domain in the interval 1 to 137; it reads MAQDDSYEEK…DKFIHSTVSW (137 aa). 4 residues coordinate a 1,2-diacyl-sn-glycero-3-phospho-(1D-myo-inositol-3-phosphate): R55, S57, K81, and R104. Positions 179-272 are disordered; that stretch reads ANSLSPPSSR…NGKDAPSPVL (94 aa). Residues 203–212 are compositionally biased toward low complexity; the sequence is SSLEPSSPLG. A compositionally biased stretch (polar residues) spans 245 to 263; it reads YNSSPSELSPTQRRSSISN.

This sequence belongs to the sorting nexin family.

It is found in the cytoplasm. It localises to the endosome membrane. The protein resides in the preautophagosomal structure membrane. Functionally, required for cytoplasm to vacuole transport (Cvt), pexophagy and mitophagy. Also involved in endoplasmic reticulum-specific autophagic process and is essential for the survival of cells subjected to severe ER stress. Functions in protein retrieval from the endocytic pathway. The chain is Autophagy-related protein 20 (atg20) from Schizosaccharomyces pombe (strain 972 / ATCC 24843) (Fission yeast).